We begin with the raw amino-acid sequence, 122 residues long: Large ribosomal subunit protein uL14c (122 aa).

This sequence belongs to the universal ribosomal protein uL14 family. In terms of assembly, part of the 50S ribosomal subunit.

Its subcellular location is the plastid. It is found in the chloroplast. In terms of biological role, binds to 23S rRNA. This Tupiella akineta (Green alga) protein is Large ribosomal subunit protein uL14c.